The primary structure comprises 141 residues: Galactose-6-phosphate isomerase subunit LacA 1 (141 aa).

Belongs to the LacAB/RpiB family. As to quaternary structure, heteromultimeric protein consisting of LacA and LacB.

The enzyme catalyses aldehydo-D-galactose 6-phosphate = keto-D-tagatose 6-phosphate. The protein operates within carbohydrate metabolism; D-galactose 6-phosphate degradation; D-tagatose 6-phosphate from D-galactose 6-phosphate: step 1/1. This chain is Galactose-6-phosphate isomerase subunit LacA 1, found in Streptococcus pyogenes serotype M1.